The following is a 99-amino-acid chain: ATP-dependent Clp protease adapter protein ClpS (99 aa).

This sequence belongs to the ClpS family. Binds to the N-terminal domain of the chaperone ClpA.

Its function is as follows. Involved in the modulation of the specificity of the ClpAP-mediated ATP-dependent protein degradation. The sequence is that of ATP-dependent Clp protease adapter protein ClpS from Helicobacter hepaticus (strain ATCC 51449 / 3B1).